The sequence spans 655 residues: Probable replication restart protein PriA (655 aa).

Zn(2+)-binding residues include cysteine 368, cysteine 371, cysteine 377, cysteine 380, cysteine 396, cysteine 399, cysteine 408, and cysteine 411.

It belongs to the helicase family. PriA subfamily. Component of the replication restart primosome. Zn(2+) is required as a cofactor.

Functionally, initiates the restart of stalled replication forks, which reloads the replicative helicase on sites other than the origin of replication. Recognizes and binds to abandoned replication forks and remodels them to uncover a helicase loading site. Promotes assembly of the primosome at these replication forks. This chain is Probable replication restart protein PriA, found in Mycobacterium bovis (strain ATCC BAA-935 / AF2122/97).